A 305-amino-acid polypeptide reads, in one-letter code: Acetylglutamate kinase (305 aa).

Substrate-binding positions include 78-79 (GG), Arg100, and Asn202.

This sequence belongs to the acetylglutamate kinase family. ArgB subfamily.

It localises to the cytoplasm. The enzyme catalyses N-acetyl-L-glutamate + ATP = N-acetyl-L-glutamyl 5-phosphate + ADP. It participates in amino-acid biosynthesis; L-arginine biosynthesis; N(2)-acetyl-L-ornithine from L-glutamate: step 2/4. Functionally, catalyzes the ATP-dependent phosphorylation of N-acetyl-L-glutamate. The sequence is that of Acetylglutamate kinase from Polaromonas sp. (strain JS666 / ATCC BAA-500).